A 280-amino-acid polypeptide reads, in one-letter code: Ribonuclease Z (280 aa).

Residues His61, His63, Asp65, His66, His153, Asp176, and His240 each coordinate Zn(2+). The active-site Proton acceptor is Asp65.

It belongs to the RNase Z family. Homodimer. The cofactor is Zn(2+).

It carries out the reaction Endonucleolytic cleavage of RNA, removing extra 3' nucleotides from tRNA precursor, generating 3' termini of tRNAs. A 3'-hydroxy group is left at the tRNA terminus and a 5'-phosphoryl group is left at the trailer molecule.. Zinc phosphodiesterase, which displays some tRNA 3'-processing endonuclease activity. Probably involved in tRNA maturation, by removing a 3'-trailer from precursor tRNA. In Mycobacterium bovis (strain BCG / Pasteur 1173P2), this protein is Ribonuclease Z.